The chain runs to 395 residues: uncharacterized protein (395 aa).

This is an uncharacterized protein from Methanocaldococcus jannaschii (strain ATCC 43067 / DSM 2661 / JAL-1 / JCM 10045 / NBRC 100440) (Methanococcus jannaschii).